The primary structure comprises 208 residues: Ribonuclease HII (208 aa).

Residues 12–201 (ELVAGVDEVG…VRALLEPVAV (190 aa)) enclose the RNase H type-2 domain. Residues Asp18, Glu19, and Asp110 each contribute to the a divalent metal cation site.

Belongs to the RNase HII family. Mn(2+) serves as cofactor. The cofactor is Mg(2+).

The protein localises to the cytoplasm. It catalyses the reaction Endonucleolytic cleavage to 5'-phosphomonoester.. In terms of biological role, endonuclease that specifically degrades the RNA of RNA-DNA hybrids. The polypeptide is Ribonuclease HII (Ectopseudomonas mendocina (strain ymp) (Pseudomonas mendocina)).